The chain runs to 522 residues: MLSTQWNANKQISRQIYQLCRGLAQKATAVNLEEAKPYADIPGPSKLQLIRAFLPGGLYKNLPVHEMFLDMNRQYGSIFRMPSVAGTDLVLTMNPQDYEVIFRNEGQYPYRRSFEVMDYFKRVHRREVFDGYDGLTSGNGPAWGKMRTAVNPILLQPRNAKLYMTNLVQVSDEFLERIRIIRDPVTQEMPDDFAVDIRHLVIESICSVALNTHLGLLGEQRNNKDIQKLVLALQDVVELGFQLDIMPAFWKYLPMPNFKKLMRSLDTITDFCYFHIGNALKRIEEDAKAGTLNEIGLETSLLEKLARFDRQTAVIIAMDLLFAGADPTLVTLGGILFSLSKSPDKQARLLEEIRGILPNKDSSLTIENMRNLPYLRACIKEGIRMYPIGPGTLRRMPHDVVLSGYRVVAGTDVGIAANYQMANMEQFVPKVREFIPERWLRDESNSHLVGETATPFMYLPFGFGPRSCAGKRIVDMMLEIAISRLVRNFKIGFDYPIENAFKAQFFVQPNIPFKFKFIERNE.

Heme is bound at residue cysteine 468.

The protein belongs to the cytochrome P450 family. It depends on heme as a cofactor.

Its subcellular location is the mitochondrion membrane. This Drosophila melanogaster (Fruit fly) protein is Probable cytochrome P450 12e1, mitochondrial (Cyp12e1).